The following is a 186-amino-acid chain: Trafficking protein particle complex subunit 3 (186 aa).

Belongs to the TRAPP small subunits family. BET3 subfamily. In terms of assembly, homodimer. Part of the multisubunit TRAPP (transport protein particle) complex.

The protein resides in the golgi apparatus. It localises to the cis-Golgi network. It is found in the endoplasmic reticulum. Functionally, may play a role in vesicular transport from endoplasmic reticulum to Golgi. The protein is Trafficking protein particle complex subunit 3 (trappc3) of Dictyostelium discoideum (Social amoeba).